We begin with the raw amino-acid sequence, 61 residues long: Photosystem II reaction center protein K (61 aa).

A propeptide spanning residues 1–24 (MLNIFSLISICLNSALYSSSFFFG) is cleaved from the precursor. A helical transmembrane segment spans residues 40–60 (MPVIPVFFFLLAFVWQAAVSF).

Belongs to the PsbK family. As to quaternary structure, PSII is composed of 1 copy each of membrane proteins PsbA, PsbB, PsbC, PsbD, PsbE, PsbF, PsbH, PsbI, PsbJ, PsbK, PsbL, PsbM, PsbT, PsbX, PsbY, PsbZ, Psb30/Ycf12, at least 3 peripheral proteins of the oxygen-evolving complex and a large number of cofactors. It forms dimeric complexes.

The protein localises to the plastid. The protein resides in the chloroplast thylakoid membrane. Functionally, one of the components of the core complex of photosystem II (PSII). PSII is a light-driven water:plastoquinone oxidoreductase that uses light energy to abstract electrons from H(2)O, generating O(2) and a proton gradient subsequently used for ATP formation. It consists of a core antenna complex that captures photons, and an electron transfer chain that converts photonic excitation into a charge separation. The protein is Photosystem II reaction center protein K of Jasminum nudiflorum (Winter jasmine).